We begin with the raw amino-acid sequence, 133 residues long: S-protein homolog 21 (133 aa).

Residues 1–21 (MKNLSIFLFVVGLCMISDVYG) form the signal peptide.

It belongs to the plant self-incompatibility (S1) protein family.

Its subcellular location is the secreted. In Arabidopsis thaliana (Mouse-ear cress), this protein is S-protein homolog 21.